A 287-amino-acid polypeptide reads, in one-letter code: Undecaprenyl-diphosphatase (287 aa).

Helical transmembrane passes span 6–26 (LYLI…FIPV), 45–65 (SGKV…MWIF), 85–105 (AFTR…AIFI), 111–131 (VFYH…IMLW), 204–224 (ATEF…TYDL), 238–258 (AIAV…RAVL), and 265–285 (TYRG…AWLM).

It belongs to the UppP family.

It localises to the cell inner membrane. It carries out the reaction di-trans,octa-cis-undecaprenyl diphosphate + H2O = di-trans,octa-cis-undecaprenyl phosphate + phosphate + H(+). In terms of biological role, catalyzes the dephosphorylation of undecaprenyl diphosphate (UPP). Confers resistance to bacitracin. The chain is Undecaprenyl-diphosphatase from Bordetella petrii (strain ATCC BAA-461 / DSM 12804 / CCUG 43448).